The chain runs to 261 residues: GTP cyclohydrolase FolE2 (261 aa).

It belongs to the GTP cyclohydrolase IV family.

It catalyses the reaction GTP + H2O = 7,8-dihydroneopterin 3'-triphosphate + formate + H(+). It functions in the pathway cofactor biosynthesis; 7,8-dihydroneopterin triphosphate biosynthesis; 7,8-dihydroneopterin triphosphate from GTP: step 1/1. Its function is as follows. Converts GTP to 7,8-dihydroneopterin triphosphate. This Herminiimonas arsenicoxydans protein is GTP cyclohydrolase FolE2.